We begin with the raw amino-acid sequence, 310 residues long: tRNA dimethylallyltransferase (310 aa).

10 to 17 (GPTAVGKS) is a binding site for ATP. Substrate is bound at residue 12–17 (TAVGKS). Positions 35–38 (DSMQ) are interaction with substrate tRNA.

The protein belongs to the IPP transferase family. Monomer. Requires Mg(2+) as cofactor.

It carries out the reaction adenosine(37) in tRNA + dimethylallyl diphosphate = N(6)-dimethylallyladenosine(37) in tRNA + diphosphate. Functionally, catalyzes the transfer of a dimethylallyl group onto the adenine at position 37 in tRNAs that read codons beginning with uridine, leading to the formation of N6-(dimethylallyl)adenosine (i(6)A). In Clostridium perfringens (strain SM101 / Type A), this protein is tRNA dimethylallyltransferase.